Consider the following 431-residue polypeptide: CCA-adding enzyme (431 aa).

2 residues coordinate ATP: Ser-50 and Lys-53. 2 residues coordinate CTP: Ser-50 and Lys-53. The Mg(2+) site is built by Asp-61, Asp-63, and Asp-112. Positions 135, 155, and 164 each coordinate ATP. CTP contacts are provided by His-135, Lys-155, and Tyr-164.

This sequence belongs to the tRNA nucleotidyltransferase/poly(A) polymerase family. Archaeal CCA-adding enzyme subfamily. As to quaternary structure, homodimer. Mg(2+) is required as a cofactor.

The catalysed reaction is a tRNA precursor + 2 CTP + ATP = a tRNA with a 3' CCA end + 3 diphosphate. The enzyme catalyses a tRNA with a 3' CCA end + 2 CTP + ATP = a tRNA with a 3' CCACCA end + 3 diphosphate. In terms of biological role, catalyzes the addition and repair of the essential 3'-terminal CCA sequence in tRNAs without using a nucleic acid template. Adds these three nucleotides in the order of C, C, and A to the tRNA nucleotide-73, using CTP and ATP as substrates and producing inorganic pyrophosphate. tRNA 3'-terminal CCA addition is required both for tRNA processing and repair. Also involved in tRNA surveillance by mediating tandem CCA addition to generate a CCACCA at the 3' terminus of unstable tRNAs. While stable tRNAs receive only 3'-terminal CCA, unstable tRNAs are marked with CCACCA and rapidly degraded. This is CCA-adding enzyme from Thermoplasma acidophilum (strain ATCC 25905 / DSM 1728 / JCM 9062 / NBRC 15155 / AMRC-C165).